The primary structure comprises 337 residues: Ketol-acid reductoisomerase (NADP(+)) (337 aa).

The 181-residue stretch at 3-183 (VEMFYDDDAD…GGTRAGVIKT (181 aa)) folds into the KARI N-terminal Rossmann domain. NADP(+) is bound by residues 26-29 (YGSQ), Lys-49, Ser-52, Ser-54, and 84-87 (DTAQ). His-109 is a catalytic residue. Gly-135 contacts NADP(+). The KARI C-terminal knotted domain maps to 184-329 (TFKEETETDL…KKLRDLMSWV (146 aa)). Asp-192, Glu-196, Glu-228, and Glu-232 together coordinate Mg(2+). Residue Ser-253 participates in substrate binding.

The protein belongs to the ketol-acid reductoisomerase family. Mg(2+) is required as a cofactor.

It carries out the reaction (2R)-2,3-dihydroxy-3-methylbutanoate + NADP(+) = (2S)-2-acetolactate + NADPH + H(+). The catalysed reaction is (2R,3R)-2,3-dihydroxy-3-methylpentanoate + NADP(+) = (S)-2-ethyl-2-hydroxy-3-oxobutanoate + NADPH + H(+). It participates in amino-acid biosynthesis; L-isoleucine biosynthesis; L-isoleucine from 2-oxobutanoate: step 2/4. The protein operates within amino-acid biosynthesis; L-valine biosynthesis; L-valine from pyruvate: step 2/4. In terms of biological role, involved in the biosynthesis of branched-chain amino acids (BCAA). Catalyzes an alkyl-migration followed by a ketol-acid reduction of (S)-2-acetolactate (S2AL) to yield (R)-2,3-dihydroxy-isovalerate. In the isomerase reaction, S2AL is rearranged via a Mg-dependent methyl migration to produce 3-hydroxy-3-methyl-2-ketobutyrate (HMKB). In the reductase reaction, this 2-ketoacid undergoes a metal-dependent reduction by NADPH to yield (R)-2,3-dihydroxy-isovalerate. This Rhodococcus jostii (strain RHA1) protein is Ketol-acid reductoisomerase (NADP(+)).